A 160-amino-acid chain; its full sequence is MRLQLIGIGRTKAGAERELTARYLERAGQAGRAIGFPSVELREIEESRARRGDERKAQEGKAIRALLQPASLIVAFDEHGRSIDSEGFADCLGQARDSGKAMMHFLIGGADGLEPALTESAAFVFAFGKMTWPHQLVRIMAAEQIYRAMTILGHHPYHRA.

S-adenosyl-L-methionine contacts are provided by residues Gly108 and 127–132; that span reads FGKMTW.

It belongs to the RNA methyltransferase RlmH family. As to quaternary structure, homodimer.

It is found in the cytoplasm. The enzyme catalyses pseudouridine(1915) in 23S rRNA + S-adenosyl-L-methionine = N(3)-methylpseudouridine(1915) in 23S rRNA + S-adenosyl-L-homocysteine + H(+). In terms of biological role, specifically methylates the pseudouridine at position 1915 (m3Psi1915) in 23S rRNA. This Beijerinckia indica subsp. indica (strain ATCC 9039 / DSM 1715 / NCIMB 8712) protein is Ribosomal RNA large subunit methyltransferase H.